The sequence spans 531 residues: T-complex protein 1 subunit zeta (531 aa).

Alanine 2 is modified (N-acetylalanine). The residue at position 5 (lysine 5) is an N6-acetyllysine. ADP is bound at residue glycine 39. Glycine 39 is an ATP binding site. Aspartate 90 is a Mg(2+) binding site. 6 residues coordinate ADP: glycine 91, threonine 92, threonine 93, serine 94, threonine 158, and lysine 159. Residues glycine 91, threonine 92, and threonine 93 each coordinate ATP. Position 199 is an N6-acetyllysine (lysine 199). The residue at position 205 (serine 205) is a Phosphoserine. Lysine 251 participates in a covalent cross-link: Glycyl lysine isopeptide (Lys-Gly) (interchain with G-Cter in SUMO2). N6-acetyllysine occurs at positions 287, 365, 377, and 388. Alanine 411 serves as a coordination point for ADP. 4 residues coordinate ATP: alanine 411, glycine 412, aspartate 496, and lysine 501. Residue aspartate 496 coordinates ADP.

The protein belongs to the TCP-1 chaperonin family. As to quaternary structure, component of the chaperonin-containing T-complex (TRiC), a hexadecamer composed of two identical back-to-back stacked rings enclosing a protein folding chamber. Each ring is made up of eight different subunits: TCP1/CCT1, CCT2, CCT3, CCT4, CCT5, CCT6A/CCT6, CCT7, CCT8. Interacts with PACRG.

It localises to the cytoplasm. It catalyses the reaction ATP + H2O = ADP + phosphate + H(+). Component of the chaperonin-containing T-complex (TRiC), a molecular chaperone complex that assists the folding of actin, tubulin and other proteins upon ATP hydrolysis. The TRiC complex mediates the folding of WRAP53/TCAB1, thereby regulating telomere maintenance. In Oryctolagus cuniculus (Rabbit), this protein is T-complex protein 1 subunit zeta (CCT6).